A 309-amino-acid polypeptide reads, in one-letter code: Ribosomal RNA small subunit methyltransferase H (309 aa).

S-adenosyl-L-methionine is bound by residues 33-35 (GGH), D53, F79, D100, and Q107.

The protein belongs to the methyltransferase superfamily. RsmH family.

The protein localises to the cytoplasm. It catalyses the reaction cytidine(1402) in 16S rRNA + S-adenosyl-L-methionine = N(4)-methylcytidine(1402) in 16S rRNA + S-adenosyl-L-homocysteine + H(+). In terms of biological role, specifically methylates the N4 position of cytidine in position 1402 (C1402) of 16S rRNA. The protein is Ribosomal RNA small subunit methyltransferase H of Clostridium botulinum (strain Langeland / NCTC 10281 / Type F).